The chain runs to 242 residues: Probable transcriptional regulatory protein XCV3282 (242 aa).

Belongs to the TACO1 family.

The protein resides in the cytoplasm. In Xanthomonas euvesicatoria pv. vesicatoria (strain 85-10) (Xanthomonas campestris pv. vesicatoria), this protein is Probable transcriptional regulatory protein XCV3282.